We begin with the raw amino-acid sequence, 474 residues long: Trehalose-6-phosphate synthase (474 aa).

Position 10 (arginine 10) interacts with D-glucose 6-phosphate. Residue 22-23 participates in UDP-alpha-D-glucose binding; the sequence is GG. D-glucose 6-phosphate-binding residues include tyrosine 77 and aspartate 131. Positions 263 and 268 each coordinate UDP-alpha-D-glucose. Arginine 301 serves as a coordination point for D-glucose 6-phosphate. Residues phenylalanine 340 and 366–370 each bind UDP-alpha-D-glucose; that span reads LVAKE.

It belongs to the glycosyltransferase 20 family. In terms of assembly, homotetramer.

It catalyses the reaction D-glucose 6-phosphate + UDP-alpha-D-glucose = alpha,alpha-trehalose 6-phosphate + UDP + H(+). It functions in the pathway glycan biosynthesis; trehalose biosynthesis. In terms of biological role, probably involved in the osmoprotection via the biosynthesis of trehalose. Catalyzes the transfer of glucose from UDP-alpha-D-glucose (UDP-Glc) to D-glucose 6-phosphate (Glc-6-P) to form trehalose-6-phosphate. Acts with retention of the anomeric configuration of the UDP-sugar donor. The chain is Trehalose-6-phosphate synthase from Klebsiella pneumoniae subsp. pneumoniae (strain ATCC 700721 / MGH 78578).